The following is a 362-amino-acid chain: Chorismate synthase (362 aa).

Residue arginine 47 participates in NADP(+) binding. Residues 124–126, glycine 286, 301–305, and arginine 327 each bind FMN; these read RSS and KPTAT.

The protein belongs to the chorismate synthase family. As to quaternary structure, homotetramer. FMNH2 is required as a cofactor.

The catalysed reaction is 5-O-(1-carboxyvinyl)-3-phosphoshikimate = chorismate + phosphate. It functions in the pathway metabolic intermediate biosynthesis; chorismate biosynthesis; chorismate from D-erythrose 4-phosphate and phosphoenolpyruvate: step 7/7. In terms of biological role, catalyzes the anti-1,4-elimination of the C-3 phosphate and the C-6 proR hydrogen from 5-enolpyruvylshikimate-3-phosphate (EPSP) to yield chorismate, which is the branch point compound that serves as the starting substrate for the three terminal pathways of aromatic amino acid biosynthesis. This reaction introduces a second double bond into the aromatic ring system. The chain is Chorismate synthase from Synechococcus sp. (strain ATCC 27144 / PCC 6301 / SAUG 1402/1) (Anacystis nidulans).